A 239-amino-acid polypeptide reads, in one-letter code: MKNDVISPEFDENGRPLRRIRSFVRRQGRLTKGQQHALDNIWPVMGVEFNDAPLDFAALFGRDAPVTLEIGFGMGASLVAMAKAKPEQNFLGIEVHSPGVGACLASAEEEGVQNLRVMCHDAVEVLHTMIPDNSLNMVQLFFPDPWHKARHNKRRIVQPPFAELVKSKLKLGGVFHMATDWEAYAVHMLEVMSSLEGYRNQSASNDYVPRPESRPVTKFEQRGHRLGHGVWDLMFERVK.

4 residues coordinate S-adenosyl-L-methionine: Glu69, Glu94, Asp121, and Asp144. Residue Asp144 is part of the active site. Residue Lys148 coordinates substrate. Positions 150–155 (RHNKRR) are interaction with RNA. Residues Asp180 and 217-220 (TKFE) each bind substrate.

Belongs to the class I-like SAM-binding methyltransferase superfamily. TrmB family. Monomer.

The enzyme catalyses guanosine(46) in tRNA + S-adenosyl-L-methionine = N(7)-methylguanosine(46) in tRNA + S-adenosyl-L-homocysteine. Its pathway is tRNA modification; N(7)-methylguanine-tRNA biosynthesis. Catalyzes the formation of N(7)-methylguanine at position 46 (m7G46) in tRNA. The chain is tRNA (guanine-N(7)-)-methyltransferase from Klebsiella pneumoniae subsp. pneumoniae (strain ATCC 700721 / MGH 78578).